The chain runs to 261 residues: 4-hydroxy-tetrahydrodipicolinate reductase (261 aa).

NAD(+)-binding positions include 13–18, 91–93, and 115–118; these read GMAGRM, GTS, and APNF. H149 functions as the Proton donor/acceptor in the catalytic mechanism. H150 is a binding site for (S)-2,3,4,5-tetrahydrodipicolinate. K153 acts as the Proton donor in catalysis. 159–160 is a binding site for (S)-2,3,4,5-tetrahydrodipicolinate; sequence GT.

This sequence belongs to the DapB family.

It is found in the cytoplasm. The enzyme catalyses (S)-2,3,4,5-tetrahydrodipicolinate + NAD(+) + H2O = (2S,4S)-4-hydroxy-2,3,4,5-tetrahydrodipicolinate + NADH + H(+). The catalysed reaction is (S)-2,3,4,5-tetrahydrodipicolinate + NADP(+) + H2O = (2S,4S)-4-hydroxy-2,3,4,5-tetrahydrodipicolinate + NADPH + H(+). It functions in the pathway amino-acid biosynthesis; L-lysine biosynthesis via DAP pathway; (S)-tetrahydrodipicolinate from L-aspartate: step 4/4. Functionally, catalyzes the conversion of 4-hydroxy-tetrahydrodipicolinate (HTPA) to tetrahydrodipicolinate. This Granulibacter bethesdensis (strain ATCC BAA-1260 / CGDNIH1) protein is 4-hydroxy-tetrahydrodipicolinate reductase.